The following is a 56-amino-acid chain: Large ribosomal subunit protein bL33 (56 aa).

This sequence belongs to the bacterial ribosomal protein bL33 family.

The polypeptide is Large ribosomal subunit protein bL33 (Nocardioides sp. (strain ATCC BAA-499 / JS614)).